The chain runs to 1579 residues: DNA-directed RNA polymerase II subunit RPB1 (1579 aa).

8 residues coordinate Zn(2+): cysteine 68, cysteine 71, cysteine 78, histidine 81, cysteine 108, cysteine 111, cysteine 149, and cysteine 171. Mg(2+)-binding residues include aspartate 485, aspartate 487, and aspartate 489. The segment at 642-654 is bridging helix; it reads PQEFFFHAMAGRE. A Glycyl lysine isopeptide (Lys-Gly) (interchain with G-Cter in ubiquitin) cross-link involves residue lysine 1080. A compositionally biased stretch (low complexity) spans 1382–1565; that stretch reads SPTYSPTSPS…NSPQYSPRSP (184 aa). Positions 1382–1579 are disordered; that stretch reads SPTYSPTSPS…DQNDDKDKKQ (198 aa). 16 repeat units span residues 1385 to 1391, 1392 to 1398, 1399 to 1405, 1406 to 1412, 1413 to 1419, 1420 to 1426, 1427 to 1433, 1434 to 1440, 1441 to 1447, 1448 to 1454, 1455 to 1461, 1462 to 1468, 1469 to 1475, 1476 to 1482, 1483 to 1489, and 1490 to 1496. The tract at residues 1385–1566 is C-terminal domain (CTD); 26 X 7 AA approximate tandem repeats of Y-S-P-T-S-P-[S-A-Q]; sequence YSPTSPSYSP…SPQYSPRSPL (182 aa). The 17; approximate repeat unit spans residues 1497–1503; sequence YSPTSPL. 7 consecutive repeat copies span residues 1504–1510, 1511–1517, 1518–1524, 1525–1531, 1532–1538, 1539–1545, and 1546–1552. The stretch at 1553–1559 is one 25; approximate repeat; that stretch reads YSPNSPQ. The stretch at 1560-1566 is one 26; approximate repeat; that stretch reads YSPRSPL.

Belongs to the RNA polymerase beta' chain family. In terms of assembly, component of the RNA polymerase II (Pol II) complex consisting of 12 subunits. In terms of processing, the tandem 7 residues repeats in the C-terminal domain (CTD) can be highly phosphorylated. The phosphorylation activates Pol II. Phosphorylation occurs mainly at residues 'Ser-2' and 'Ser-5' of the heptapeptide repeat. The phosphorylation state is believed to result from the balanced action of site-specific CTD kinases and phosphatase, and a 'CTD code' that specifies the position of Pol II within the transcription cycle has been proposed. Following transcription stress, the elongating form of RNA polymerase II (RNA pol IIo) is polyubiquitinated via 'Lys-63'-linkages on Lys-1080 at DNA damage sites without leading to degradation: ubiquitination promotes RNA pol IIo backtracking to allow access by the transcription-coupled nucleotide excision repair (TC-NER) machinery. Subsequent DEF1-dependent polyubiquitination by the elongin complex via 'Lys-48'-linkages may lead to proteasome-mediated degradation; presumably at stalled RNA pol II where TC-NER has failed, to halt global transcription and enable 'last resort' DNA repair pathways.

The protein resides in the nucleus. The catalysed reaction is RNA(n) + a ribonucleoside 5'-triphosphate = RNA(n+1) + diphosphate. Its function is as follows. DNA-dependent RNA polymerase catalyzes the transcription of DNA into RNA using the four ribonucleoside triphosphates as substrates. Largest and catalytic component of RNA polymerase II which synthesizes mRNA precursors and many functional non-coding RNAs. Forms the polymerase active center together with the second largest subunit. Pol II is the central component of the basal RNA polymerase II transcription machinery. It is composed of mobile elements that move relative to each other. RPB1 is part of the core element with the central large cleft, the clamp element that moves to open and close the cleft and the jaws that are thought to grab the incoming DNA template. At the start of transcription, a single-stranded DNA template strand of the promoter is positioned within the central active site cleft of Pol II. A bridging helix emanates from RPB1 and crosses the cleft near the catalytic site and is thought to promote translocation of Pol II by acting as a ratchet that moves the RNA-DNA hybrid through the active site by switching from straight to bent conformations at each step of nucleotide addition. During transcription elongation, Pol II moves on the template as the transcript elongates. Elongation is influenced by the phosphorylation status of the C-terminal domain (CTD) of Pol II largest subunit (RPB1), which serves as a platform for assembly of factors that regulate transcription initiation, elongation, termination and mRNA processing. The chain is DNA-directed RNA polymerase II subunit RPB1 (RPB1) from Meyerozyma guilliermondii (strain ATCC 6260 / CBS 566 / DSM 6381 / JCM 1539 / NBRC 10279 / NRRL Y-324) (Yeast).